Consider the following 41-residue polypeptide: Large ribosomal subunit protein bL36 (41 aa).

This sequence belongs to the bacterial ribosomal protein bL36 family.

The chain is Large ribosomal subunit protein bL36 from Rhodopseudomonas palustris (strain BisA53).